Reading from the N-terminus, the 169-residue chain is GSAGLGALVLFAAYANDLSYFAANGDTYPYFKDIGEISFSLANPYVVAGLLFGGLIPYLFGGIAMTAVGKAASAIVEEVRRQFREKPGIMAGTEKPDYGRAVDLLTKAAIREMVIPSLLPVLAPLVVYFGVLLISGSKAFAFAALGAYLLAVIMNRVLVAICMTLVGSS.

Transmembrane regions (helical) follow at residues 45–65 (YVVA…GIAM), 114–134 (VIPS…VLLI), and 141–161 (AFAA…LVAI).

It belongs to the H(+)-translocating pyrophosphatase (TC 3.A.10) family. As to quaternary structure, homodimer. Mg(2+) serves as cofactor.

The protein localises to the cell inner membrane. The catalysed reaction is diphosphate + H2O + H(+)(in) = 2 phosphate + 2 H(+)(out). Proton pump that utilizes the energy of pyrophosphate hydrolysis as the driving force for proton movement across the membrane. Generates a proton motive force. This chain is Pyrophosphate-energized proton pump 1 (hppA1), found in Rhizobium leguminosarum bv. trifolii.